The chain runs to 419 residues: Transcription termination factor Rho (419 aa).

The region spanning 48 to 123 (GFTCSGTLEI…VRLDSINGDH (76 aa)) is the Rho RNA-BD domain. ATP-binding positions include 169–174 (GKGQRA), 181–186 (KIGKTV), and arginine 212.

Belongs to the Rho family. In terms of assembly, homohexamer. The homohexamer assembles into an open ring structure.

Its function is as follows. Facilitates transcription termination by a mechanism that involves Rho binding to the nascent RNA, activation of Rho's RNA-dependent ATPase activity, and release of the mRNA from the DNA template. The polypeptide is Transcription termination factor Rho (Neisseria gonorrhoeae).